Consider the following 483-residue polypeptide: Dual specificity protein kinase CLK1 (483 aa).

Residues 1 to 49 (MRHSKRTYCPDWDERDWDYGTWRSSSSHKRKKRSHSSAREQKRCRYDHS) form a disordered region. Residues 26 to 36 (SSHKRKKRSHS) are compositionally biased toward basic residues. The Nuclear localization signal signature appears at 29–33 (KRKKR). Residues 37–49 (SAREQKRCRYDHS) are compositionally biased toward basic and acidic residues. Phosphoserine is present on S61. The span at 84–111 (EPGHPYGEPGSRYQMHSSKSSGRSGRSS) shows a compositional bias: low complexity. The disordered stretch occupies residues 84-146 (EPGHPYGEPG…SRSVEDDEEG (63 aa)). Residues 112 to 137 (YKSKHRSRHHTSQHHSHGKSHRRKRS) are compositionally biased toward basic residues. A Phosphoserine modification is found at S139. Residues 160 to 476 (YEIVDTLGEG…LKEALKHPFF (317 aa)) form the Protein kinase domain. ATP-binding positions include 166–174 (LGEGAFGKV) and K190. Catalysis depends on D287, which acts as the Proton acceptor.

Belongs to the protein kinase superfamily. CMGC Ser/Thr protein kinase family. Lammer subfamily. As to quaternary structure, interacts with PPIG and UBL5. Autophosphorylates on all three types of residues.

It localises to the nucleus. It catalyses the reaction L-seryl-[protein] + ATP = O-phospho-L-seryl-[protein] + ADP + H(+). It carries out the reaction L-threonyl-[protein] + ATP = O-phospho-L-threonyl-[protein] + ADP + H(+). The enzyme catalyses L-tyrosyl-[protein] + ATP = O-phospho-L-tyrosyl-[protein] + ADP + H(+). Regulates splicing of its own pre-mRNA according to its kinase activity; increased expression of the catalytically active form influences splicing to generate the catalytically inactive splicing variant lacking the kinase domain. Leucettine L41 inhibits its kinase activity and affects the regulation of alternative splicing mediated by phosphorylation of SR proteins. Dual specificity kinase acting on both serine/threonine and tyrosine-containing substrates. Phosphorylates serine- and arginine-rich (SR) proteins of the spliceosomal complex and may be a constituent of a network of regulatory mechanisms that enable SR proteins to control RNA splicing. Phosphorylates: SRSF1, SRSF3 and PTPN1. Regulates the alternative splicing of tissue factor (F3) pre-mRNA in endothelial cells. This is Dual specificity protein kinase CLK1 from Mus musculus (Mouse).